We begin with the raw amino-acid sequence, 613 residues long: UvrABC system protein C (613 aa).

In terms of domain architecture, GIY-YIG spans 29–107; sequence DVAGVYKMLG…IKTLKPKYNI (79 aa). Positions 217–252 constitute a UVR domain; that stretch reads KELQRELFDSMRKFSDNLDYESAMVYRDRLQALKSI.

It belongs to the UvrC family. In terms of assembly, interacts with UvrB in an incision complex.

The protein resides in the cytoplasm. In terms of biological role, the UvrABC repair system catalyzes the recognition and processing of DNA lesions. UvrC both incises the 5' and 3' sides of the lesion. The N-terminal half is responsible for the 3' incision and the C-terminal half is responsible for the 5' incision. This chain is UvrABC system protein C, found in Anaplasma marginale (strain St. Maries).